Here is a 138-residue protein sequence, read N- to C-terminus: Small ribosomal subunit protein uS11 (138 aa).

Residues 1–12 (MPPKKANAAGPK) are compositionally biased toward low complexity. Residues 1–23 (MPPKKANAAGPKKGQKTRKREKK) are disordered. The segment covering 13–22 (KGQKTRKREK) has biased composition (basic residues).

It belongs to the universal ribosomal protein uS11 family. As to quaternary structure, part of the 30S ribosomal subunit. Interacts with proteins S7 and S18. Binds to IF-3.

In terms of biological role, located on the platform of the 30S subunit, it bridges several disparate RNA helices of the 16S rRNA. Forms part of the Shine-Dalgarno cleft in the 70S ribosome. The protein is Small ribosomal subunit protein uS11 of Mycobacterium leprae (strain Br4923).